We begin with the raw amino-acid sequence, 55 residues long: Large ribosomal subunit protein bL33 (55 aa).

This sequence belongs to the bacterial ribosomal protein bL33 family.

This Caulobacter sp. (strain K31) protein is Large ribosomal subunit protein bL33.